Here is a 243-residue protein sequence, read N- to C-terminus: Geranylgeranylglyceryl phosphate synthase (243 aa).

Mg(2+) is bound by residues Asp-22 and Ser-51. Sn-glycerol 1-phosphate is bound by residues 169-175 (YLEAGSG), 200-201 (GG), and 222-223 (GT).

The protein belongs to the GGGP/HepGP synthase family. Group II subfamily. Mg(2+) serves as cofactor.

It is found in the cytoplasm. It catalyses the reaction sn-glycerol 1-phosphate + (2E,6E,10E)-geranylgeranyl diphosphate = sn-3-O-(geranylgeranyl)glycerol 1-phosphate + diphosphate. Its pathway is membrane lipid metabolism; glycerophospholipid metabolism. Prenyltransferase that catalyzes the transfer of the geranylgeranyl moiety of geranylgeranyl diphosphate (GGPP) to the C3 hydroxyl of sn-glycerol-1-phosphate (G1P). This reaction is the first ether-bond-formation step in the biosynthesis of archaeal membrane lipids. This is Geranylgeranylglyceryl phosphate synthase from Methanosphaera stadtmanae (strain ATCC 43021 / DSM 3091 / JCM 11832 / MCB-3).